Consider the following 66-residue polypeptide: Large ribosomal subunit protein bL33c (66 aa).

The protein belongs to the bacterial ribosomal protein bL33 family.

It localises to the plastid. Its subcellular location is the chloroplast. This chain is Large ribosomal subunit protein bL33c, found in Jasminum nudiflorum (Winter jasmine).